The sequence spans 161 residues: Putative pre-16S rRNA nuclease (161 aa).

Belongs to the YqgF nuclease family.

Its subcellular location is the cytoplasm. Functionally, could be a nuclease involved in processing of the 5'-end of pre-16S rRNA. The chain is Putative pre-16S rRNA nuclease from Bradyrhizobium diazoefficiens (strain JCM 10833 / BCRC 13528 / IAM 13628 / NBRC 14792 / USDA 110).